The primary structure comprises 589 residues: Kelch-like protein 25 (589 aa).

Residues 46-114 (TDVTLWAGDR…AYSSRIVINE (69 aa)) form the BTB domain. The 102-residue stretch at 149–250 (CLGMMVLSDA…LPSDCLKNAV (102 aa)) folds into the BACK domain. 6 Kelch repeats span residues 296-340 (TLLI…AIGC), 341-388 (KVYV…ELEN), 389-444 (CLYV…SAKL), 446-492 (LFVF…VLGS), 493-538 (QIFI…ASGN), and 539-585 (KLYV…STWK).

Component of the BCR(KLHL25) E3 ubiquitin ligase complex, at least composed of CUL3, KLHL25 and RBX1.

Its pathway is protein modification; protein ubiquitination. Substrate-specific adapter of a BCR (BTB-CUL3-RBX1) E3 ubiquitin ligase complex involved in various processes, such as translation homeostasis and lipid synthesis. The BCR(KLHL25) ubiquitin ligase complex acts by mediating ubiquitination of hypophosphorylated EIF4EBP1 (4E-BP1): ubiquitination and subsequent degradation of hypophosphorylated EIF4EBP1 (4E-BP1) probably serves as a homeostatic mechanism to maintain translation and prevent eIF4E inhibition when eIF4E levels are low. The BCR(KLHL25) complex does not target EIF4EBP1 (4E-BP1) when it is hyperphosphorylated or associated with eIF4E. The BCR(KLHL25) complex also acts as a regulator of lipid synthesis by mediating ubiquitination and degradation of ACLY, thereby inhibiting lipid synthesis. BCR(KLHL25)-mediated degradation of ACLY promotes fatty acid oxidation and is required for differentiation of inducible regulatory T (iTreg) cells. This is Kelch-like protein 25 from Mus musculus (Mouse).